The primary structure comprises 32 residues: Phallacidin proprotein (32 aa).

Positions 1–10 (MSDINATRLP) are excised as a propeptide. The segment at residues 11 to 17 (AWLVDCP) is a cross-link (cyclopeptide (Ala-Pro)). Residues 12–16 (WLVDC) constitute a cross-link (2'-cysteinyl-6'-hydroxytryptophan sulfoxide (Trp-Cys)). A propeptide spanning residues 18 to 32 (CVGDDINRLLTRGEK) is cleaved from the precursor.

This sequence belongs to the MSDIN fungal toxin family. Post-translationally, processed by the macrocyclase-peptidase enzyme POPB to yield a toxic cyclic heptapeptide. POPB first removes 10 residues from the N-terminus. Conformational trapping of the remaining peptide forces the enzyme to release this intermediate rather than proceed to macrocyclization. The enzyme rebinds the remaining peptide in a different conformation and catalyzes macrocyclization of the N-terminal 7 residues.

Major toxin that belongs to the bicyclic heptapeptides called phallotoxins. Although structurally related to amatoxins, phallotoxins have a different mode of action, which is the stabilization of F-actin. Phallotoxins are poisonous when administered parenterally, but not orally because of poor absorption. The polypeptide is Phallacidin proprotein (Amanita pallidorosea).